The following is a 270-amino-acid chain: Bifunctional folate synthesis protein (270 aa).

A DHNA region spans residues 1-119 (MDQLQIKDLE…TCSVTIHRRK (119 aa)). Residues Glu-21, Tyr-53, and 72-73 (IE) contribute to the substrate site. The active-site Proton donor/acceptor; for DHNA activity is Lys-99. Positions 120 to 270 (QRAFIALGSN…IRNLYDALKK (151 aa)) are HPPK. Residues 160–163 (TEPW), 171–173 (FAN), 192–195 (LAIE), 200–215 (RVREVHWGPRLIDLDL), 227–233 (DLILPHP), and 238–240 (RLF) contribute to the ATP site. Mg(2+) contacts are provided by Asp-212 and Asp-214.

In the N-terminal section; belongs to the DHNA family. It in the C-terminal section; belongs to the HPPK family. Homotrimer or homotetramer.

It carries out the reaction 7,8-dihydroneopterin = 6-hydroxymethyl-7,8-dihydropterin + glycolaldehyde. The catalysed reaction is 6-hydroxymethyl-7,8-dihydropterin + ATP = (7,8-dihydropterin-6-yl)methyl diphosphate + AMP + H(+). It functions in the pathway cofactor biosynthesis; tetrahydrofolate biosynthesis; 2-amino-4-hydroxy-6-hydroxymethyl-7,8-dihydropteridine diphosphate from 7,8-dihydroneopterin triphosphate: step 3/4. It participates in cofactor biosynthesis; tetrahydrofolate biosynthesis; 2-amino-4-hydroxy-6-hydroxymethyl-7,8-dihydropteridine diphosphate from 7,8-dihydroneopterin triphosphate: step 4/4. In terms of biological role, catalyzes two sequential steps of tetrahydrofolate biosynthesis, the conversion of 7,8-dihydroneopterin to 6-hydroxymethyl-7,8-dihydropterin diphosphate. This is Bifunctional folate synthesis protein from Streptococcus pneumoniae serotype 4 (strain ATCC BAA-334 / TIGR4).